We begin with the raw amino-acid sequence, 908 residues long: MITKLLTKVIGSRNDRTLRRLRKIVKEINNFEPTFEALSDDELKAKTVEFRERLDKGESLDQLLPEAFATVREASKRVYGMRHFDVQMIGGMVLNAGQIAEMRTGEGKTLTATLPAYLNALPSKGVHVITVNDYLAKRDAETNRPLFEFLGMTVGVNVANMAPPEKKEAYQADILYGTNNEFGFDYLRDNMAFRAEDRVQRERFFAVVDEVDSILIDEARTPLIISGPAEDSSDLYTRINTLIPSLERQDKEDSEEYRGEGHYTMDEKSKQVHLTENGQEFVEELMVKNGLMEEGDTLYSPTNISLLHHVNAALRAHVLFEKNVDYIVTEEGEVVIVDEHTGRTMPGRRWSEGLHQAVEAKEGVKIQNENQTLASITFQNFFRLYEKLSGMTGTADTEAFEFQSIYGLETVVIPTNKPMVRNDMPDVVYRTEEDKFNAIIEDIKDRVAAGQPSLVGTVSIEKSELLSNALKKSKIKHNVLNAKFHEMEAEIVAQAGMPGAVTIATNMAGRGTDIVLGGSWQAQLEKLDNPTKEQIEKIKADWRIIHDKVLESGGLHIIGTERHESRRIDNQLRGRSGRQGDAGSSRFYLSMEDSLLRIFTSDRMAGLIQSGMDEGEAIESKMLSRSIEKAQRKVEGRNFDIRKQLLEYDDVANDQRKVVYELRDELMSSDDISEMIEHNREDVLASVIDEYIAPQSLEDMWDIAGLQDRLKNDFDLDFDIQGWLDEDDKLYEEALRERILGMAVDSYKQKEEVVGAQVLRNFEKSVMLQTLDGLWKEHLAAMDHLRQGIHLRGYAQKNPKQEYKRESFELFEGLLDVLKTDVVTILSKVRVQQQEEVEKMEAQRQAQAEQAARRAQAQHATAENQLADDEAEAASPQTVVRDERKVGRNEPCPCGSGKKYKQCHGKID.

Residues Gln87, 105–109, and Asp513 each bind ATP; that span reads GEGKT. Positions 852-863 are enriched in low complexity; that stretch reads ARRAQAQHATAE. The tract at residues 852-908 is disordered; sequence ARRAQAQHATAENQLADDEAEAASPQTVVRDERKVGRNEPCPCGSGKKYKQCHGKID. Positions 892, 894, 903, and 904 each coordinate Zn(2+). The span at 898 to 908 shows a compositional bias: basic residues; sequence KKYKQCHGKID.

The protein belongs to the SecA family. In terms of assembly, monomer and homodimer. Part of the essential Sec protein translocation apparatus which comprises SecA, SecYEG and auxiliary proteins SecDF-YajC and YidC. Zn(2+) is required as a cofactor.

Its subcellular location is the cell inner membrane. It is found in the cytoplasm. It catalyses the reaction ATP + H2O + cellular proteinSide 1 = ADP + phosphate + cellular proteinSide 2.. Functionally, part of the Sec protein translocase complex. Interacts with the SecYEG preprotein conducting channel. Has a central role in coupling the hydrolysis of ATP to the transfer of proteins into and across the cell membrane, serving both as a receptor for the preprotein-SecB complex and as an ATP-driven molecular motor driving the stepwise translocation of polypeptide chains across the membrane. The polypeptide is Protein translocase subunit SecA (Vibrio atlanticus (strain LGP32) (Vibrio splendidus (strain Mel32))).